A 332-amino-acid chain; its full sequence is Torsin-1A (332 aa).

Positions 1-20 (MKLGRAALGLLLLAPSVVQA) are cleaved as a signal peptide. The segment at 91–251 (KPKKPLTLSL…VSVFNNKNSG (161 aa)) is interaction with SNAPIN. ATP is bound at residue 102 to 109 (GWTGTGKN). Residues Asn-143 and Asn-158 are each glycosylated (N-linked (GlcNAc...) asparagine). Positions 251–332 (GFWHSSLIDR…FTKLDYYYDD (82 aa)) are interaction with KLC1. An interaction with SYNE3 region spans residues 312 to 332 (RVFSDKGCKTVFTKLDYYYDD).

Belongs to the ClpA/ClpB family. Torsin subfamily. Homohexamer. Interacts with TOR1B; the interaction may be specific of neural tissues. Interacts (ATP-bound) with TOR1AIP1 and TOR1AIP2; the interactions induce ATPase activity. Interacts with KLHL14; preferentially when ATP-free. Interacts with KLC1 (via TPR repeats); the interaction associates TOR1A with the kinesin oligomeric complex. Interacts with COPS4; the interaction associates TOR1A with the CSN complex. Interacts with SNAPIN; the interaction is direct and associates SNAPIN with the CSN complex. Interacts with STON2. Interacts (ATP-bound) with SYNE3 (via KASH domain); the interaction is required for SYNE3 nuclear envelope localization. Interacts with VIM; the interaction associates TOR1A with the cytoskeleton. Interacts with PLEC. Interacts (ATP-bound) with SLC6A3; regulates SLC6A3 transport to the plasma membrane. In terms of processing, N-glycosylated.

Its subcellular location is the endoplasmic reticulum lumen. It localises to the nucleus membrane. The protein localises to the cell projection. The protein resides in the growth cone. It is found in the cytoplasmic vesicle membrane. Its subcellular location is the cytoplasmic vesicle. It localises to the secretory vesicle. The protein localises to the synaptic vesicle. The protein resides in the cytoplasm. It is found in the cytoskeleton. The catalysed reaction is ATP + H2O = ADP + phosphate + H(+). In terms of biological role, protein with chaperone functions important for the control of protein folding, processing, stability and localization as well as for the reduction of misfolded protein aggregates. Involved in the regulation of synaptic vesicle recycling, controls STON2 protein stability in collaboration with the COP9 signalosome complex (CSN). In the nucleus, may link the cytoskeleton with the nuclear envelope, this mechanism seems to be crucial for the control of nuclear polarity, cell movement and, specifically in neurons, nuclear envelope integrity. Participates in the cellular trafficking and may regulate the subcellular location of multipass membrane proteins such as the dopamine transporter SLC6A3, leading to the modulation of dopamine neurotransmission. In the endoplasmic reticulum, plays a role in the quality control of protein folding by increasing clearance of misfolded proteins such as SGCE variants or holding them in an intermediate state for proper refolding. May have a redundant function with TOR1B in non-neural tissues. This Macaca fascicularis (Crab-eating macaque) protein is Torsin-1A (TOR1A).